A 310-amino-acid polypeptide reads, in one-letter code: tRNA pseudouridine synthase B (310 aa).

D49 (nucleophile) is an active-site residue.

Belongs to the pseudouridine synthase TruB family. Type 1 subfamily.

It carries out the reaction uridine(55) in tRNA = pseudouridine(55) in tRNA. Functionally, responsible for synthesis of pseudouridine from uracil-55 in the psi GC loop of transfer RNAs. The protein is tRNA pseudouridine synthase B of Rhizobium etli (strain ATCC 51251 / DSM 11541 / JCM 21823 / NBRC 15573 / CFN 42).